A 68-amino-acid chain; its full sequence is ATP synthase protein 8 (68 aa).

A helical membrane pass occupies residues 8-24; it reads VWPTIIMSMLLALFLLM. Residue Lys54 is modified to N6-acetyllysine; alternate. Lys54 is modified (N6-succinyllysine; alternate). Position 57 is an N6-acetyllysine (Lys57).

It belongs to the ATPase protein 8 family. As to quaternary structure, F-type ATPases have 2 components, CF(1) - the catalytic core - and CF(0) - the membrane proton channel. Component of an ATP synthase complex composed of ATP5PB, ATP5MC1, ATP5F1E, ATP5PD, ATP5ME, ATP5PF, ATP5MF, MT-ATP6, MT-ATP8, ATP5F1A, ATP5F1B, ATP5F1D, ATP5F1C, ATP5PO, ATP5MG, ATP5MK and ATP5MJ. Interacts with PRICKLE3.

Its subcellular location is the mitochondrion membrane. In terms of biological role, mitochondrial membrane ATP synthase (F(1)F(0) ATP synthase or Complex V) produces ATP from ADP in the presence of a proton gradient across the membrane which is generated by electron transport complexes of the respiratory chain. F-type ATPases consist of two structural domains, F(1) - containing the extramembraneous catalytic core and F(0) - containing the membrane proton channel, linked together by a central stalk and a peripheral stalk. During catalysis, ATP synthesis in the catalytic domain of F(1) is coupled via a rotary mechanism of the central stalk subunits to proton translocation. Part of the complex F(0) domain. Minor subunit located with subunit a in the membrane. The sequence is that of ATP synthase protein 8 (MT-ATP8) from Hylobates lar (Lar gibbon).